The chain runs to 475 residues: D(1B) dopamine receptor (475 aa).

Residues 1 to 38 (MLPPGRNRTAQPARLGLQRQLAQVDAPAGSATPLGPAQ) are Extracellular-facing. Asn-7 is a glycosylation site (N-linked (GlcNAc...) asparagine). Residues 39-64 (VVTAGLLTLLIVWTLLGNVLVCAAIV) traverse the membrane as a helical segment. Residues 65–75 (RSRHLRAKMTN) are Cytoplasmic-facing. The helical transmembrane segment at 76–102 (IFIVSLAVSDLFVALLVMPWKAVAEVA) threads the bilayer. Residues 103 to 111 (GYWPFGTFC) are Extracellular-facing. A disulfide bond links Cys-111 and Cys-211. Residues 112-134 (DIWVAFDIMCSTASILNLCIISV) form a helical membrane-spanning segment. Residues 135 to 153 (DRYWAISRPFRYERKMTQR) are Cytoplasmic-facing. The chain crosses the membrane as a helical span at residues 154–179 (VALVMVGLAWTLSILISFIPVQLNWH). Topologically, residues 180-215 (RDKAGSQGQEGLLSNGTPWEEGWELEGRTENCDSSL) are extracellular. Residues 216 to 240 (NRTYAISSSLISFYIPVAIMIVTYT) traverse the membrane as a helical segment. The Cytoplasmic segment spans residues 241–289 (RIYRIAQVQIRRISSLERAAEHAQSCRSRGAYEPDPSLRASIKKETKVF). A helical membrane pass occupies residues 290-317 (KTLSMIMGVFVCCWLPFFILNCMVPFCS). The Extracellular portion of the chain corresponds to 318–335 (SGDAEGPKTGFPCVSETT). A helical transmembrane segment spans residues 336–357 (FDIFVWFGWANSSLNPIIYAFN). The Cytoplasmic portion of the chain corresponds to 358–475 (ADFRKVFAQL…LTPNCFDKTA (118 aa)). A lipid anchor (S-palmitoyl cysteine) is attached at Cys-370. The disordered stretch occupies residues 415–443 (SGDREVGEEEEEGPFDHMSQISPTTPDGD).

The protein belongs to the G-protein coupled receptor 1 family. In terms of tissue distribution, brain, in the lateral mammillary nuclei, the anterior pretectal nuclei, and several layers of the hippocampus.

The protein localises to the cell membrane. Functionally, dopamine receptor whose activity is mediated by G proteins which activate adenylyl cyclase. In Rattus norvegicus (Rat), this protein is D(1B) dopamine receptor (Drd5).